The sequence spans 53 residues: Lantibiotic paenibacillin (53 aa).

Positions 1-24 are excised as a propeptide; the sequence is MKVDQMFDLDLRKSYEASELSPQA. Ala24 carries the post-translational modification N-acetylalanine. 2,3-didehydroalanine (Ser) is present on Ser25. A 2,3-didehydrobutyrine mark is found at Thr29 and Thr30. The segment at residues 34–38 is a cross-link (lanthionine (Ser-Cys)); the sequence is SKAVC. 3 cross-links (beta-methyllanthionine (Thr-Cys)) span residues 40-43, 42-45, and 46-49; these read TLTC, TCIC, and TGSC. The segment at residues 48–52 is a cross-link (lanthionine (Ser-Cys)); the sequence is SCSNC. Ser50 is modified (2,3-didehydroalanine (Ser)).

Post-translationally, maturation of lantibiotics involves the enzymatic conversion of Thr, and Ser into dehydrated AA and the formation of thioether bonds with cysteine. This is followed by membrane translocation and cleavage of the modified precursor. In terms of processing, the structure of the 2,3-didehydrobutyrines is not discussed in PubMed:17071789.

The protein resides in the secreted. Its function is as follows. Lanthionine-containing peptide antibiotic (lantibiotic) active on Gram-positive bacteria. The bactericidal activity of lantibiotics is based on depolarization of energized bacterial cytoplasmic membranes, initiated by the formation of aqueous transmembrane pores. Lacks antibacterial activity against Gram-negative bacteria. The protein is Lantibiotic paenibacillin of Paenibacillus polymyxa (Bacillus polymyxa).